The chain runs to 119 residues: Myohemerythrin-1 (119 aa).

Histidine 25, histidine 55, asparagine 58, glutamate 59, histidine 74, histidine 78, histidine 107, and aspartate 112 together coordinate Fe cation.

This sequence belongs to the hemerythrin family. Monomer. In terms of tissue distribution, muscle.

Functionally, myohemerythrin is an oxygen-binding protein found in the retractor muscles of certain worms. The oxygen-binding site contains two iron atoms. This is Myohemerythrin-1 from Phascolopsis gouldii (Peanut worm).